Consider the following 632-residue polypeptide: Effector protein hopAD1 (632 aa).

The interval 13–34 is disordered; it reads TAVDSSLPTSATSQTISNTKSR. The segment covering 15-32 has biased composition (polar residues); sequence VDSSLPTSATSQTISNTK.

It localises to the secreted. The sequence is that of Effector protein hopAD1 (hopAD1) from Pseudomonas syringae pv. tomato (strain ATCC BAA-871 / DC3000).